The chain runs to 297 residues: IMPACT family member C14C8.09c (297 aa).

A coiled-coil region spans residues Leu-225–Asn-255. 2 stretches are compositionally biased toward basic and acidic residues: residues Glu-228–Asn-250 and Ser-280–Glu-297. Residues Glu-228 to Glu-297 are disordered.

The protein belongs to the IMPACT family.

This Schizosaccharomyces pombe (strain 972 / ATCC 24843) (Fission yeast) protein is IMPACT family member C14C8.09c.